Here is a 570-residue protein sequence, read N- to C-terminus: Sulfite reductase [NADPH] hemoprotein beta-component (570 aa).

[4Fe-4S] cluster-binding residues include Cys-434, Cys-440, Cys-479, and Cys-483. Residue Cys-483 participates in siroheme binding.

This sequence belongs to the nitrite and sulfite reductase 4Fe-4S domain family. As to quaternary structure, alpha(8)-beta(8). The alpha component is a flavoprotein, the beta component is a hemoprotein. Siroheme is required as a cofactor. The cofactor is [4Fe-4S] cluster.

It catalyses the reaction hydrogen sulfide + 3 NADP(+) + 3 H2O = sulfite + 3 NADPH + 4 H(+). It participates in sulfur metabolism; hydrogen sulfide biosynthesis; hydrogen sulfide from sulfite (NADPH route): step 1/1. Component of the sulfite reductase complex that catalyzes the 6-electron reduction of sulfite to sulfide. This is one of several activities required for the biosynthesis of L-cysteine from sulfate. The chain is Sulfite reductase [NADPH] hemoprotein beta-component from Escherichia coli O1:K1 / APEC.